A 328-amino-acid chain; its full sequence is MTVEKEAPDAHFTVDKQNISLWPREPPPKSGPSLVPGKTPTVRAALICLTLVLVASVLLQAVLYPRFMGTISDVKTNVQLLKGRVDNISTLDSEIKKNSDGMEAAGVQIQMVNESLGYVRSQFLKLKTSVEKANAQIQILTRSWEEVSTLNAQIPELKSDLEKASALNTKIRALQGSLENMSKLLKRQNDILQVVSQGWKYFKGNFYYFSLIPKTWYSAEQFCVSRNSHLTSVTSESEQEFLYKTAGGLIYWIGLTKAGMEGDWSWVDDTPFNKVQSVRFWIPGEPNNAGNNEHCGNIKAPSLQAWNDAPCDKTFLFICKRPYVPSEP.

The Cytoplasmic portion of the chain corresponds to 1–43 (MTVEKEAPDAHFTVDKQNISLWPREPPPKSGPSLVPGKTPTVR). The helical; Signal-anchor for type II membrane protein transmembrane segment at 44–64 (AALICLTLVLVASVLLQAVLY) threads the bilayer. Residues 65-328 (PRFMGTISDV…CKRPYVPSEP (264 aa)) are Extracellular-facing. N-linked (GlcNAc...) asparagine glycosylation is found at N87, N113, and N180. Residues 145-190 (EEVSTLNAQIPELKSDLEKASALNTKIRALQGSLENMSKLLKRQND) adopt a coiled-coil conformation. The C-type lectin domain occupies 202-320 (FKGNFYYFSL…CDKTFLFICK (119 aa)). Intrachain disulfides connect C223/C319 and C295/C311.

Homotrimer. As to expression, exclusively expressed by Langerhans cells. Expressed in astrocytoma and malignant ependymoma, but not in normal brain tissues.

It localises to the membrane. In terms of biological role, calcium-dependent lectin displaying mannose-binding specificity. Induces the formation of Birbeck granules (BGs); is a potent regulator of membrane superimposition and zippering. Binds to sulfated as well as mannosylated glycans, keratan sulfate (KS) and beta-glucans. Facilitates uptake of antigens and is involved in the routing and/or processing of antigen for presentation to T cells. Major receptor on primary Langerhans cells for Candida species, Saccharomyces species, and Malassezia furfur. Protects against human immunodeficiency virus-1 (HIV-1) infection. Binds to high-mannose structures present on the envelope glycoprotein which is followed by subsequent targeting of the virus to the Birbeck granules leading to its rapid degradation. This Homo sapiens (Human) protein is C-type lectin domain family 4 member K (CD207).